The following is a 64-amino-acid chain: Large ribosomal subunit protein bL28 (64 aa).

Belongs to the bacterial ribosomal protein bL28 family.

In Mycoplasmoides gallisepticum (strain R(low / passage 15 / clone 2)) (Mycoplasma gallisepticum), this protein is Large ribosomal subunit protein bL28.